Consider the following 89-residue polypeptide: Small ribosomal subunit protein uS15 (89 aa).

This sequence belongs to the universal ribosomal protein uS15 family. Part of the 30S ribosomal subunit. Forms a bridge to the 50S subunit in the 70S ribosome, contacting the 23S rRNA.

One of the primary rRNA binding proteins, it binds directly to 16S rRNA where it helps nucleate assembly of the platform of the 30S subunit by binding and bridging several RNA helices of the 16S rRNA. Functionally, forms an intersubunit bridge (bridge B4) with the 23S rRNA of the 50S subunit in the ribosome. The sequence is that of Small ribosomal subunit protein uS15 from Saccharophagus degradans (strain 2-40 / ATCC 43961 / DSM 17024).